The chain runs to 265 residues: Zearalenone hydrolase (265 aa).

Glycine 35, serine 105, and serine 106 together coordinate zearalenone. Serine 105 is an active-site residue. Residue glutamate 129 is part of the active site. Zearalenone contacts are provided by tryptophan 185, tyrosine 189, and histidine 243. Residue histidine 243 is part of the active site.

Belongs to the AB hydrolase superfamily. Hydrolase RutD family. As to quaternary structure, homodimer.

It catalyses the reaction zearalenone + H2O = hydrolyzed zearalenone + H(+). Functionally, lactonohydrolase that specifically hydrolyzes zearalenone (ZEN), an oestrogenic mycotoxin produced by numerous Fusarium specie, into a non-toxic alkylresorcinol product. The polypeptide is Zearalenone hydrolase (Cladophialophora bantiana (strain ATCC 10958 / CDC1940 / 8579 / CBS 173.52) (Xylohypha bantiana)).